A 218-amino-acid polypeptide reads, in one-letter code: Ribose-5-phosphate isomerase A (218 aa).

Residues 28-31, 81-84, and 94-97 contribute to the substrate site; these read TGST, DGAD, and KGGG. Glutamate 103 functions as the Proton acceptor in the catalytic mechanism. Lysine 121 is a binding site for substrate.

The protein belongs to the ribose 5-phosphate isomerase family. In terms of assembly, homodimer.

The enzyme catalyses aldehydo-D-ribose 5-phosphate = D-ribulose 5-phosphate. It participates in carbohydrate degradation; pentose phosphate pathway; D-ribose 5-phosphate from D-ribulose 5-phosphate (non-oxidative stage): step 1/1. Functionally, catalyzes the reversible conversion of ribose-5-phosphate to ribulose 5-phosphate. This chain is Ribose-5-phosphate isomerase A, found in Colwellia psychrerythraea (strain 34H / ATCC BAA-681) (Vibrio psychroerythus).